A 326-amino-acid chain; its full sequence is Vomeronasal type-1 receptor 94 (326 aa).

Over M1–T32 the chain is Extracellular. A helical transmembrane segment spans residues F33–F53. Residues K54 to D65 are Cytoplasmic-facing. A helical transmembrane segment spans residues L66 to A86. The Extracellular segment spans residues T87–S110. An intrachain disulfide couples C101 to C188. Residues F111–L130 form a helical membrane-spanning segment. Topologically, residues S131 to C150 are cytoplasmic. A helical membrane pass occupies residues A151 to I171. Residues A172–T203 lie on the Extracellular side of the membrane. N175 is a glycosylation site (N-linked (GlcNAc...) asparagine). Residues L204 to V224 form a helical membrane-spanning segment. Topologically, residues A225–H254 are cytoplasmic. The helical transmembrane segment at S255–C275 threads the bilayer. At S276–T285 the chain is on the extracellular side. The helical transmembrane segment at S286 to M306 threads the bilayer. The Cytoplasmic portion of the chain corresponds to S307–V326.

Belongs to the G-protein coupled receptor 1 family.

The protein localises to the cell membrane. Its function is as follows. Putative pheromone receptor implicated in the regulation of social as well as reproductive behavior. In Rattus norvegicus (Rat), this protein is Vomeronasal type-1 receptor 94 (Vom1r94).